The chain runs to 155 residues: Interleukin-2 (155 aa).

An N-terminal signal peptide occupies residues 1–20; that stretch reads MYRMQLLSCIALTLALVANG. O-linked (GalNAc...) threonine glycosylation occurs at T23. A disulfide bridge connects residues C79 and C127.

Belongs to the IL-2 family.

The protein resides in the secreted. Its function is as follows. Cytokine produced by activated CD4-positive helper T-cells and to a lesser extend activated CD8-positive T-cells and natural killer (NK) cells that plays pivotal roles in the immune response and tolerance. Binds to a receptor complex composed of either the high-affinity trimeric IL-2R (IL2RA/CD25, IL2RB/CD122 and IL2RG/CD132) or the low-affinity dimeric IL-2R (IL2RB and IL2RG). Interaction with the receptor leads to oligomerization and conformation changes in the IL-2R subunits resulting in downstream signaling starting with phosphorylation of JAK1 and JAK3. In turn, JAK1 and JAK3 phosphorylate the receptor to form a docking site leading to the phosphorylation of several substrates including STAT5. This process leads to activation of several pathways including STAT, phosphoinositide-3-kinase/PI3K and mitogen-activated protein kinase/MAPK pathways. Functions as a T-cell growth factor and can increase NK-cell cytolytic activity as well. Promotes strong proliferation of activated B-cells and subsequently immunoglobulin production. Plays a pivotal role in regulating the adaptive immune system by controlling the survival and proliferation of regulatory T-cells, which are required for the maintenance of immune tolerance. Moreover, participates in the differentiation and homeostasis of effector T-cell subsets, including Th1, Th2, Th17 as well as memory CD8-positive T-cells. The protein is Interleukin-2 (IL2) of Capra hircus (Goat).